The following is a 459-amino-acid chain: tRNA modification GTPase MnmE (459 aa).

Residues R24, E82, and K122 each contribute to the (6S)-5-formyl-5,6,7,8-tetrahydrofolate site. The TrmE-type G domain occupies 219–379 (GIKVVISGAP…LRQHLYFSFK (161 aa)). Residues 229 to 234 (NSGKSS), 248 to 254 (TNFPGTT), and 273 to 276 (DTAG) contribute to the GTP site. Mg(2+)-binding residues include S233 and T254. K459 lines the (6S)-5-formyl-5,6,7,8-tetrahydrofolate pocket.

Belongs to the TRAFAC class TrmE-Era-EngA-EngB-Septin-like GTPase superfamily. TrmE GTPase family. As to quaternary structure, homodimer. Heterotetramer of two MnmE and two MnmG subunits. It depends on K(+) as a cofactor.

The protein localises to the cytoplasm. In terms of biological role, exhibits a very high intrinsic GTPase hydrolysis rate. Involved in the addition of a carboxymethylaminomethyl (cmnm) group at the wobble position (U34) of certain tRNAs, forming tRNA-cmnm(5)s(2)U34. This Buchnera aphidicola subsp. Baizongia pistaciae (strain Bp) protein is tRNA modification GTPase MnmE.